We begin with the raw amino-acid sequence, 831 residues long: Probable glucan 1,3-beta-glucosidase D (831 aa).

Basic and acidic residues-rich tracts occupy residues 1–24 (MPSHSRSRDRYRSERDPSRRYREV), 44–56 (RRDDYQHDIRSHE), 79–93 (RSHDVEGRRRERSRA), 102–115 (SRRDRNRGGEEYRR), 137–151 (RDGQRARPRDMDREA), and 198–213 (QRERSQEQEQPRMESK). Disordered stretches follow at residues 1–179 (MPSH…SGSH) and 192–241 (HYDE…GQSK). The Cytoplasmic portion of the chain corresponds to 1 to 297 (MPSHSRSRDR…AQPPFWKRKK (297 aa)). A helical; Signal-anchor for type II membrane protein membrane pass occupies residues 298 to 318 (WWIVIGVLVVVLAIVIPVAVV). The Extracellular segment spans residues 319–831 (MSKKHGHDDD…PSFGDLPEYY (513 aa)). 7 N-linked (GlcNAc...) asparagine glycosylation sites follow: Asn376, Asn381, Asn393, Asn410, Asn442, Asn546, and Asn558. The Proton donor role is filled by Glu597. 4 N-linked (GlcNAc...) asparagine glycosylation sites follow: Asn610, Asn636, Asn669, and Asn689. Catalysis depends on Glu702, which acts as the Nucleophile.

Belongs to the glycosyl hydrolase 5 (cellulase A) family.

It is found in the cell membrane. It catalyses the reaction Successive hydrolysis of beta-D-glucose units from the non-reducing ends of (1-&gt;3)-beta-D-glucans, releasing alpha-glucose.. In terms of biological role, glucosidase involved in the degradation of cellulosic biomass. Active on lichenan. The protein is Probable glucan 1,3-beta-glucosidase D (exgD) of Aspergillus oryzae (strain ATCC 42149 / RIB 40) (Yellow koji mold).